The chain runs to 210 residues: Probable nicotinate-nucleotide adenylyltransferase (210 aa).

The protein belongs to the NadD family.

It catalyses the reaction nicotinate beta-D-ribonucleotide + ATP + H(+) = deamido-NAD(+) + diphosphate. It functions in the pathway cofactor biosynthesis; NAD(+) biosynthesis; deamido-NAD(+) from nicotinate D-ribonucleotide: step 1/1. Its function is as follows. Catalyzes the reversible adenylation of nicotinate mononucleotide (NaMN) to nicotinic acid adenine dinucleotide (NaAD). The protein is Probable nicotinate-nucleotide adenylyltransferase of Streptococcus mutans serotype c (strain ATCC 700610 / UA159).